The primary structure comprises 733 residues: Photosystem I P700 chlorophyll a apoprotein A2 (733 aa).

Helical transmembrane passes span 46 to 69 (IFAS…FHVA), 135 to 158 (LYQG…LHLQ), 175 to 199 (LNHH…HVAI), 273 to 291 (IAHH…GHMY), 330 to 353 (LHFQ…QHMY), 369 to 395 (AALY…IFFV), 417 to 439 (ALIS…LYVH), and 516 to 534 (FLVH…LILV). 2 residues coordinate [4Fe-4S] cluster: Cys558 and Cys567. 2 helical membrane passes run 574 to 595 (AFYL…YWHW) and 642 to 664 (LSVW…MFLI). Chlorophyll a contacts are provided by His653, Met661, and Tyr669. Trp670 contributes to the phylloquinone binding site. A helical transmembrane segment spans residues 706–726 (LVGLAHFTVGYVLTYAAFLIA).

The protein belongs to the PsaA/PsaB family. The PsaA/B heterodimer binds the P700 chlorophyll special pair and subsequent electron acceptors. PSI consists of a core antenna complex that captures photons, and an electron transfer chain that converts photonic excitation into a charge separation. The cyanobacterial PSI reaction center is composed of one copy each of PsaA,B,C,D,E,F,I,J,K,L,M and X, and forms trimeric complexes. PSI electron transfer chain: 5 chlorophyll a, 1 chlorophyll a', 2 phylloquinones and 3 4Fe-4S clusters. PSI core antenna: 90 chlorophyll a, 22 carotenoids, 3 phospholipids and 1 galactolipid. P700 is a chlorophyll a/chlorophyll a' dimer, A0 is one or more chlorophyll a, A1 is one or both phylloquinones and FX is a shared 4Fe-4S iron-sulfur center. serves as cofactor.

It is found in the cellular thylakoid membrane. The enzyme catalyses reduced [plastocyanin] + hnu + oxidized [2Fe-2S]-[ferredoxin] = oxidized [plastocyanin] + reduced [2Fe-2S]-[ferredoxin]. Functionally, psaA and PsaB bind P700, the primary electron donor of photosystem I (PSI), as well as the electron acceptors A0, A1 and FX. PSI is a plastocyanin/cytochrome c6-ferredoxin oxidoreductase, converting photonic excitation into a charge separation, which transfers an electron from the donor P700 chlorophyll pair to the spectroscopically characterized acceptors A0, A1, FX, FA and FB in turn. Oxidized P700 is reduced on the lumenal side of the thylakoid membrane by plastocyanin or cytochrome c6. This is Photosystem I P700 chlorophyll a apoprotein A2 from Picosynechococcus sp. (strain ATCC 27264 / PCC 7002 / PR-6) (Agmenellum quadruplicatum).